The chain runs to 402 residues: MGSYSSDDVEVIREAGRAQGLATILAIGTATPPNCVAQADYADYYFRVTKSEHMVDLKEKFKRICEKTAIKKRYLALTEDYLQENPTMCEFMAPSLNARQDLVVTGVPMLGKEAAVKAIDEWGLPKSKITHLIFCTTAGVDMPGADYQLVKLLGLSPSVKRYMLYQQGCAAGGTVLRLAKDLAENNKGSRVLIVCSEITAILFHGPNENHLDSLVAQALFGDGAAALIVGSGPHLAVERPIFEIVSTDQTILPDTEKAMKLHLREGGLTFQLHRDVPLMVAKNIENAAEKALSPLGITDWNSVFWMVHPGGRAILDQVERKLNLKEDKLRASRHVLSEYGNLISACVLFIIDEVRKRSMAEGKSTTGEGLDCGVLFGFGPGMTVETVVLRSVRVTAAVANGN.

Positions 60, 63, 169, 272, 274, 310, 312, and 313 each coordinate acetoacetyl-CoA. Residue Cys169 is part of the active site.

It belongs to the thiolase-like superfamily. Chalcone/stilbene synthases family. As to expression, expressed in both vegetative and reproductive organs. The expression is strong in the leaf, scape (the inflorescence stem) and corolla (both in the ligule and the unpigmented tube), moderate in the bract and carpel, detectable in the root and pappus but not detectable in the stamen.

It carries out the reaction 2 malonyl-CoA + acetyl-CoA + 2 H(+) = triacetate lactone + 2 CO2 + 3 CoA. In terms of biological role, polyketide synthase, which uses acetyl-CoA and two condensation reactions with malonyl-CoA to form triacetic acid lactone (also called methylpyrone), a precursor of phytoalexin. May participate in insect and pathogen resistance. The protein is 2-pyrone synthase of Gerbera hybrida (Daisy).